Here is a 395-residue protein sequence, read N- to C-terminus: Elongation factor Tu (395 aa).

The tr-type G domain maps to 10 to 205; sequence KPHVNIGTIG…AVDSYIPMPE (196 aa). Residues 19 to 26 are G1; sequence GHIDHGKT. 19–26 serves as a coordination point for GTP; the sequence is GHIDHGKT. Thr26 is a binding site for Mg(2+). A G2 region spans residues 61-65; the sequence is GITIA. Positions 82–85 are G3; that stretch reads DCPG. GTP-binding positions include 82–86 and 137–140; these read DCPGH and NKVD. The segment at 137–140 is G4; the sequence is NKVD. Residues 175–177 are G5; sequence SAL.

The protein belongs to the TRAFAC class translation factor GTPase superfamily. Classic translation factor GTPase family. EF-Tu/EF-1A subfamily. In terms of assembly, monomer.

It localises to the cytoplasm. The enzyme catalyses GTP + H2O = GDP + phosphate + H(+). In terms of biological role, GTP hydrolase that promotes the GTP-dependent binding of aminoacyl-tRNA to the A-site of ribosomes during protein biosynthesis. This chain is Elongation factor Tu, found in Solibacter usitatus (strain Ellin6076).